We begin with the raw amino-acid sequence, 491 residues long: Sucrose transport protein SUC7 (491 aa).

Residues 1–13 are compositionally biased toward basic and acidic residues; that stretch reads MSDLQANKDETTV. Residues 1–25 are disordered; that stretch reads MSDLQANKDETTVDRQSSSSVDLDG. At 1 to 32 the chain is on the cytoplasmic side; that stretch reads MSDLQANKDETTVDRQSSSSVDLDGPSPLRKM. The residue at position 17 (S17) is a Phosphoserine. A helical transmembrane segment spans residues 33 to 53; the sequence is ISVASIAAGIQFGWALQLSLL. The Extracellular portion of the chain corresponds to 54–67; sequence TPYVQLLGVPHKWP. The helical transmembrane segment at 68 to 88 threads the bilayer; that stretch reads SFIWLCGPVSGLLVQPSVGYF. Residues 89–100 are Cytoplasmic-facing; sequence SDRCTSRFGRRR. A helical transmembrane segment spans residues 101-121; it reads PFIATGALLVAVSVVLIGYAA. Over 122-138 the chain is Extracellular; the sequence is DFGHSMGDKIDKPVKMR. The chain crosses the membrane as a helical span at residues 139–159; it reads AVVIFALGFWILDVANNTLQG. The Cytoplasmic portion of the chain corresponds to 160-180; sequence PCRAFLGDLAAGDAQKTRTAN. A helical transmembrane segment spans residues 181–201; the sequence is AFFSFFMAVGNVLGYAAGSYT. The Extracellular segment spans residues 202-223; that stretch reads NLYKIFPFTMTKACDIYCANLK. The chain crosses the membrane as a helical span at residues 224 to 244; sequence SCFFLSITLLLVVTIIALWYV. Topologically, residues 245–276 are cytoplasmic; it reads EDKQWSPKADSDNEKTPFFGEIFGAFKVMKRP. Residues 277–297 form a helical membrane-spanning segment; it reads MWMLLIVTALNWIAWFPFLLY. The Extracellular segment spans residues 298 to 323; it reads DTDWMGREVYGGDSKGDDKMKKLYNQ. A helical membrane pass occupies residues 324 to 344; it reads GIHVGALGLMLNSIVLGVMSL. The Cytoplasmic portion of the chain corresponds to 345-358; the sequence is GIEGISRKMGGAKR. Residues 359 to 379 traverse the membrane as a helical segment; sequence LWGAVNIILAVCLAMTVLVTK. The Extracellular portion of the chain corresponds to 380–402; it reads KAEEHRRIAGPMALPTDGIRAGA. Residues 403–423 traverse the membrane as a helical segment; sequence LTLFALLGIPLAITFSIPFAL. Residues 424–443 are Cytoplasmic-facing; that stretch reads ASIISSSSGAGQRLSLGVLN. Residues 444–464 traverse the membrane as a helical segment; it reads MAIVIPQMIVSFGVGPIDALF. Topologically, residues 465–468 are extracellular; that stretch reads GDGN. Residues 469–489 traverse the membrane as a helical segment; the sequence is LPGFVVGAIAAAVSSIVAFTV. Residues 490-491 are Cytoplasmic-facing; sequence LP.

This sequence belongs to the glycoside-pentoside-hexuronide (GPH) cation symporter transporter (TC 2.A.2.4) family. Expressed in anthers.

The protein resides in the cell membrane. The protein operates within glycan biosynthesis; sucrose metabolism. Functionally, may be responsible for the transport of glucosides into the cell, with the concomitant uptake of protons (symport system). Does not seem to transport sucrose. The polypeptide is Sucrose transport protein SUC7 (Arabidopsis thaliana (Mouse-ear cress)).